The following is a 670-amino-acid chain: MDRQQAKRRAAELRELLNRYGYEYYVLDRPSVPDAEYDRLMQELIAIEKQYPELKTSDSPTQRIGGPPLEAFRKVTHRVPMMSLANAFNEGDLRDFDRRVRQEVGEAAYVCELKIDGLAVSVRYEDGYFVQGATRGDGTTGEDITENLKTIRSLPLRLNEPVSLEARGEAFMPKASFLRLNEERQARGEELFANPRNAAAGSLRQLDPKVAASRQLDLFVYGLANAEELGIESHSAALSYLQSLGFKVNPERRRCATIDEVIAFVNEWKEKRPQLPYEIDGIVIKVDSFAQQRQLGATAKSPRWAIAYKFPAEEVVTTLIGIEVNVGRTGAVTPTAILEPVRVAGTTVQRATLHNEDFIREKDIRIGDAVIIKKAGDIIPEVVGVVVDRRDGDEVPFTMPTHCPECESELVRLDGEVALRCLNPKCPAQLRERLIHFASRSAMNIEGLGEKVVTQLFNAGLVHDVADLYQLTKEQLVGLERMGEKSAANLLAAIEASKQNSLERLLFGLGIRYVGAKAAQLLAEHFETMERLEAATKDELMAVPEIGEKMADSITTYFSQPEAVELLNELRTYGVNMAYKGRKRTAETPASSVLAGKTVVLTGKLASMSRNEAKEQIERLGGRVTGSVSRSTDIVIAGEDAGSKLDKAQQLGIEIWDETRFLQEISREEQ.

Residues 34-38 (DAEYD), 83-84 (SL), and E112 contribute to the NAD(+) site. The N6-AMP-lysine intermediate role is filled by K114. NAD(+) is bound by residues R135, E169, K285, and K309. Residues C403, C406, C421, and C426 each contribute to the Zn(2+) site. One can recognise a BRCT domain in the interval 589–670 (PASSVLAGKT…FLQEISREEQ (82 aa)).

It belongs to the NAD-dependent DNA ligase family. LigA subfamily. It depends on Mg(2+) as a cofactor. The cofactor is Mn(2+).

It catalyses the reaction NAD(+) + (deoxyribonucleotide)n-3'-hydroxyl + 5'-phospho-(deoxyribonucleotide)m = (deoxyribonucleotide)n+m + AMP + beta-nicotinamide D-nucleotide.. Its function is as follows. DNA ligase that catalyzes the formation of phosphodiester linkages between 5'-phosphoryl and 3'-hydroxyl groups in double-stranded DNA using NAD as a coenzyme and as the energy source for the reaction. It is essential for DNA replication and repair of damaged DNA. This Geobacillus thermodenitrificans (strain NG80-2) protein is DNA ligase.